A 337-amino-acid chain; its full sequence is Biotin synthase (337 aa).

The 226-residue stretch at 58–283 folds into the Radical SAM core domain; the sequence is EDVEVEGIVS…RTVLRYAGGR (226 aa). [4Fe-4S] cluster is bound by residues cysteine 73, cysteine 77, and cysteine 80. [2Fe-2S] cluster contacts are provided by cysteine 116, cysteine 149, cysteine 208, and arginine 278.

It belongs to the radical SAM superfamily. Biotin synthase family. As to quaternary structure, homodimer. The cofactor is [4Fe-4S] cluster. [2Fe-2S] cluster serves as cofactor.

The catalysed reaction is (4R,5S)-dethiobiotin + (sulfur carrier)-SH + 2 reduced [2Fe-2S]-[ferredoxin] + 2 S-adenosyl-L-methionine = (sulfur carrier)-H + biotin + 2 5'-deoxyadenosine + 2 L-methionine + 2 oxidized [2Fe-2S]-[ferredoxin]. It functions in the pathway cofactor biosynthesis; biotin biosynthesis; biotin from 7,8-diaminononanoate: step 2/2. In terms of biological role, catalyzes the conversion of dethiobiotin (DTB) to biotin by the insertion of a sulfur atom into dethiobiotin via a radical-based mechanism. This Pseudarthrobacter chlorophenolicus (strain ATCC 700700 / DSM 12829 / CIP 107037 / JCM 12360 / KCTC 9906 / NCIMB 13794 / A6) (Arthrobacter chlorophenolicus) protein is Biotin synthase.